The following is a 324-amino-acid chain: Probable UDP-sugar transporter protein SLC35A4 (324 aa).

Residues 1–18 (MSVEDGGMPGLSRPRQAR) are Cytoplasmic-facing. The helical transmembrane segment at 19-39 (WTLMLLLSTAMYGAHAPLLAL) threads the bilayer. Residues 40 to 52 (CHVDGRVPFRPSS) lie on the Lumenal side of the membrane. Residues 53-73 (AVLLTELTKLLLCAFSLLVGW) form a helical membrane-spanning segment. Topologically, residues 74-85 (QAWPQGAPPWRQ) are cytoplasmic. Residues 86–106 (AAPFALSALLYGANNNLVIYL) traverse the membrane as a helical segment. The Lumenal segment spans residues 107 to 142 (QRYMDPSTYQVLSNLKIGSTAVLYCLCLRHRLSVRQ). The chain crosses the membrane as a helical span at residues 143-163 (GLALLLLMAAGACYAAGGLQV). Residues 164-180 (PGNTLPRPPPAAAASPM) are Cytoplasmic-facing. A helical transmembrane segment spans residues 181 to 201 (PLHITPLGLLLLILYCLISGL). Residues 202–214 (SSVYTELLMKRQQ) lie on the Lumenal side of the membrane. Residues 215–235 (LPLALQNLFLYTFGVLLNLGL) traverse the membrane as a helical segment. Residues 236–250 (HAGGGPGPGLLEGFS) are Cytoplasmic-facing. Residues 251–271 (GWAALVVLSQALNGLLMSVVM) traverse the membrane as a helical segment. Residues 272 to 275 (KHGS) lie on the Lumenal side of the membrane. Residues 276 to 298 (SITRLFVVSCSLVVNAVLSAVLL) form a helical membrane-spanning segment. At 299–324 (RLQLTAAFFLATLLIGLAMRLYYGSR) the chain is on the cytoplasmic side.

This sequence belongs to the nucleotide-sugar transporter family. SLC35A subfamily. In terms of assembly, found in a complex with SLC35A2 and SLC35A3.

The protein localises to the golgi apparatus membrane. The catalysed reaction is CDP-L-ribitol(in) + CDP(out) = CDP-L-ribitol(out) + CDP(in). In terms of biological role, mediates the transport of CDP-ribitol. Does not exhibit CMP-sialic acid, UDP-galactose and UDP-N-acetylglucosamine transport activity. The protein is Probable UDP-sugar transporter protein SLC35A4 of Pongo abelii (Sumatran orangutan).